Reading from the N-terminus, the 333-residue chain is L-lactate dehydrogenase B chain (333 aa).

NAD(+)-binding positions include 29–57 (GQVGMACAISVLEKGLCDELALVDVLEDK) and Arg99. Positions 106, 138, and 169 each coordinate substrate. Position 138 (Asn138) interacts with NAD(+). His193 serves as the catalytic Proton acceptor. Thr248 contributes to the substrate binding site.

The protein belongs to the LDH/MDH superfamily. LDH family. In terms of assembly, homotetramer.

The protein resides in the cytoplasm. The enzyme catalyses (S)-lactate + NAD(+) = pyruvate + NADH + H(+). The protein operates within fermentation; pyruvate fermentation to lactate; (S)-lactate from pyruvate: step 1/1. In terms of biological role, interconverts simultaneously and stereospecifically pyruvate and lactate with concomitant interconversion of NADH and NAD(+). The sequence is that of L-lactate dehydrogenase B chain (LDHB) from Sceloporus woodi (Florida scrub lizard).